An 89-amino-acid chain; its full sequence is MANHKSAKKMIKVIAKRTLINKMRKSKTRTSIRKLVDIIKSGDKENVVLAFRNAESNLHKCVNKGVIHRNTAARKISRLNAKVKALMTA.

Belongs to the bacterial ribosomal protein bS20 family.

Functionally, binds directly to 16S ribosomal RNA. This Wolbachia sp. subsp. Drosophila simulans (strain wRi) protein is Small ribosomal subunit protein bS20.